A 377-amino-acid chain; its full sequence is 4-hydroxy-tetrahydrodipicolinate synthase 2, chloroplastic (377 aa).

Residues 1–51 (MMAAQPTANPGVRLGWKAPGALASPPRLALSRSAAAPLASHRVGRGKFSAA) constitute a chloroplast transit peptide. Thr120 provides a ligand contact to pyruvate. Residue Tyr206 is the Proton donor/acceptor of the active site. Lys234 functions as the Schiff-base intermediate with substrate in the catalytic mechanism. A pyruvate-binding site is contributed by Ile273.

It belongs to the DapA family. As to quaternary structure, tetramer of modified subunits derived from two genes in different combinations.

Its subcellular location is the plastid. It is found in the chloroplast. It carries out the reaction L-aspartate 4-semialdehyde + pyruvate = (2S,4S)-4-hydroxy-2,3,4,5-tetrahydrodipicolinate + H2O + H(+). It functions in the pathway amino-acid biosynthesis; L-lysine biosynthesis via DAP pathway; (S)-tetrahydrodipicolinate from L-aspartate: step 3/4. Sensitive to lysine inhibition. This inhibition increase in an allosteric manner with increasing concentration of the inhibitor. Catalyzes the condensation of (S)-aspartate-beta-semialdehyde [(S)-ASA] and pyruvate to 4-hydroxy-tetrahydrodipicolinate (HTPA). The sequence is that of 4-hydroxy-tetrahydrodipicolinate synthase 2, chloroplastic from Triticum aestivum (Wheat).